The chain runs to 630 residues: FAST kinase domain-containing protein 4 (630 aa).

The 59-residue stretch at 560–618 (IAFLRWEFPNFNSRSKDLLGRFVLARRHVLAAGFLVVDVPYYEWLDLKSEWQKSAYLKD) folds into the RAP domain.

Belongs to the FAST kinase family. Expression detected in spleen, testis, colon, heart, smooth muscle, kidney, brain, lung, liver, brown and white adipose tissue with highest expression in testis, heart, smooth muscle and brown adipose tissue.

Its subcellular location is the mitochondrion matrix. Its function is as follows. Plays a role in processing of mitochondrial RNA precursors and in stabilization of a subset of mature mitochondrial RNA species, such as MT-CO1, MT-CO2, MT-CYB, MT-CO3, MT-ND3, MT-ND5 and MT-ATP8/6. May play a role in cell cycle progression. The sequence is that of FAST kinase domain-containing protein 4 (Tbrg4) from Mus musculus (Mouse).